Reading from the N-terminus, the 517-residue chain is MVSQGAFAGMSRRAFLAKAAGAGAAAVLTDWAAPVIEKAYGAGPCSGHLTDIEHIVLCLQENRSFDHYFGTLSAVDGFDTPTPLFQQKGWNPETQALDPTGITLPYRINTTGGPNGVGECVNDPDHQWIAAHLSWNGGANDGWLPAQARTRSVANTPVVMGYYARPDIPIHYLLADTFTICDQYFSSLLGGTMPNRLYWISATVNPDGDQGGPQIVEPAIQPKLTFTWRIMPQNLSDAGISWKVYNSKLLGGLNDTSLSRNGYVGSFKQAADPRSDLARYGIAPAYPWDFIRDVINNTLPQVSWVVPLTVESEHPSFPVAVGAVTIVNLIRVLLRNPAVWEKTALIIAYDEHGGFFDHVTPLTAPEGTPGEWIPNSVDIDKVDGSGGIRGPIGLGFRVPCFVISPYSRGGLMVHDRFDHTSQLQLIGKRFGVPVPNLTPWRASVTGDMTSAFNFAAPPDPSPPNLDHPVRQLPKVAKCVPNVVLGFLNEGLPYRVPYPQTTPVQESGPARPIPSGIC.

The segment at residues 1-39 (MVSQGAFAGMSRRAFLAKAAGAGAAAVLTDWAAPVIEKA) is a signal peptide (tat-type signal).

Belongs to the bacterial phospholipase C family. Predicted to be exported by the Tat system. The position of the signal peptide cleavage has not been experimentally proven.

Its subcellular location is the secreted. The protein resides in the cell wall. The catalysed reaction is a 1,2-diacyl-sn-glycero-3-phosphocholine + H2O = phosphocholine + a 1,2-diacyl-sn-glycerol + H(+). It carries out the reaction 1,2-dihexadecanoyl-sn-glycero-3-phosphocholine + H2O = 1,2-dihexadecanoyl-sn-glycerol + phosphocholine + H(+). Involved in virulence. Induces cytotoxic effects on mouse macrophage cell lines, via direct or indirect enzymatic hydrolysis of cell membrane phospholipids. Hydrolyzes phosphatidylcholine. Does not have hemolytic activity. The polypeptide is Phospholipase C C (Mycobacterium tuberculosis (strain ATCC 25618 / H37Rv)).